The sequence spans 479 residues: Ribosomal RNA small subunit methyltransferase F (479 aa).

S-adenosyl-L-methionine-binding positions include 125 to 131 (AAAPGSK), Glu149, Asp176, and Asp194. Residue Cys247 is the Nucleophile of the active site.

Belongs to the class I-like SAM-binding methyltransferase superfamily. RsmB/NOP family.

It localises to the cytoplasm. The enzyme catalyses cytidine(1407) in 16S rRNA + S-adenosyl-L-methionine = 5-methylcytidine(1407) in 16S rRNA + S-adenosyl-L-homocysteine + H(+). In terms of biological role, specifically methylates the cytosine at position 1407 (m5C1407) of 16S rRNA. The chain is Ribosomal RNA small subunit methyltransferase F from Escherichia coli (strain ATCC 8739 / DSM 1576 / NBRC 3972 / NCIMB 8545 / WDCM 00012 / Crooks).